The primary structure comprises 232 residues: Orotate phosphoribosyltransferase (232 aa).

5-phospho-alpha-D-ribose 1-diphosphate contacts are provided by residues Arg107, Lys108, Lys111, and Glu133–Ser141. Residue Thr137 participates in orotate binding.

Belongs to the purine/pyrimidine phosphoribosyltransferase family. PyrE subfamily. In terms of assembly, homodimer. Requires Mg(2+) as cofactor.

The catalysed reaction is orotidine 5'-phosphate + diphosphate = orotate + 5-phospho-alpha-D-ribose 1-diphosphate. Its pathway is pyrimidine metabolism; UMP biosynthesis via de novo pathway; UMP from orotate: step 1/2. In terms of biological role, catalyzes the transfer of a ribosyl phosphate group from 5-phosphoribose 1-diphosphate to orotate, leading to the formation of orotidine monophosphate (OMP). This Cereibacter sphaeroides (strain KD131 / KCTC 12085) (Rhodobacter sphaeroides) protein is Orotate phosphoribosyltransferase.